The chain runs to 192 residues: Phosphoheptose isomerase (192 aa).

The region spanning 37–192 (LADSFKAGGK…IQLIEKEMVK (156 aa)) is the SIS domain. 52–54 (NGG) serves as a coordination point for substrate. Zn(2+) is bound by residues histidine 61 and glutamate 65. Substrate is bound by residues glutamate 65, 93–94 (ND), 119–121 (STS), serine 124, and glutamine 172. Zn(2+) is bound by residues glutamine 172 and histidine 180.

Belongs to the SIS family. GmhA subfamily. In terms of assembly, homotetramer. Zn(2+) serves as cofactor.

It is found in the cytoplasm. The enzyme catalyses 2 D-sedoheptulose 7-phosphate = D-glycero-alpha-D-manno-heptose 7-phosphate + D-glycero-beta-D-manno-heptose 7-phosphate. It functions in the pathway carbohydrate biosynthesis; D-glycero-D-manno-heptose 7-phosphate biosynthesis; D-glycero-alpha-D-manno-heptose 7-phosphate and D-glycero-beta-D-manno-heptose 7-phosphate from sedoheptulose 7-phosphate: step 1/1. Catalyzes the isomerization of sedoheptulose 7-phosphate in D-glycero-D-manno-heptose 7-phosphate. This Escherichia coli O139:H28 (strain E24377A / ETEC) protein is Phosphoheptose isomerase.